The primary structure comprises 146 residues: Anti-sigma F factor (146 aa).

This sequence belongs to the anti-sigma-factor family.

The catalysed reaction is L-seryl-[protein] + ATP = O-phospho-L-seryl-[protein] + ADP + H(+). The enzyme catalyses L-threonyl-[protein] + ATP = O-phospho-L-threonyl-[protein] + ADP + H(+). Functionally, binds to sigma F and blocks its ability to form an RNA polymerase holoenzyme (E-sigma F). Phosphorylates SpoIIAA on a serine residue. This phosphorylation may enable SpoIIAA to act as an anti-anti-sigma factor that counteracts SpoIIAB and thus releases sigma F from inhibition. The chain is Anti-sigma F factor from Geobacillus stearothermophilus (Bacillus stearothermophilus).